A 452-amino-acid chain; its full sequence is Bifunctional protein GlmU (452 aa).

Residues 1 to 225 (MEVVILAAGQ…VSETLGVNSK (225 aa)) form a pyrophosphorylase region. Residues 6–9 (LAAG), Lys20, Gln71, 76–77 (GT), 98–100 (YGD), Gly135, Glu150, Asn165, and Asn223 contribute to the UDP-N-acetyl-alpha-D-glucosamine site. Residue Asp100 coordinates Mg(2+). Asn223 lines the Mg(2+) pocket. A linker region spans residues 226 to 246 (PQLAELERIHQRNIAQRLMED). The tract at residues 247–452 (GVTLIDPARI…AGWKRPVKQR (206 aa)) is N-acetyltransferase. Arg329 and Lys347 together coordinate UDP-N-acetyl-alpha-D-glucosamine. The active-site Proton acceptor is the His359. Residues Tyr362 and Asn373 each coordinate UDP-N-acetyl-alpha-D-glucosamine. Acetyl-CoA contacts are provided by residues Ala376, 382 to 383 (NY), Ser401, Ala419, and Arg436.

It in the N-terminal section; belongs to the N-acetylglucosamine-1-phosphate uridyltransferase family. The protein in the C-terminal section; belongs to the transferase hexapeptide repeat family. As to quaternary structure, homotrimer. Mg(2+) serves as cofactor.

It localises to the cytoplasm. The catalysed reaction is alpha-D-glucosamine 1-phosphate + acetyl-CoA = N-acetyl-alpha-D-glucosamine 1-phosphate + CoA + H(+). The enzyme catalyses N-acetyl-alpha-D-glucosamine 1-phosphate + UTP + H(+) = UDP-N-acetyl-alpha-D-glucosamine + diphosphate. Its pathway is nucleotide-sugar biosynthesis; UDP-N-acetyl-alpha-D-glucosamine biosynthesis; N-acetyl-alpha-D-glucosamine 1-phosphate from alpha-D-glucosamine 6-phosphate (route II): step 2/2. It participates in nucleotide-sugar biosynthesis; UDP-N-acetyl-alpha-D-glucosamine biosynthesis; UDP-N-acetyl-alpha-D-glucosamine from N-acetyl-alpha-D-glucosamine 1-phosphate: step 1/1. It functions in the pathway bacterial outer membrane biogenesis; LPS lipid A biosynthesis. Functionally, catalyzes the last two sequential reactions in the de novo biosynthetic pathway for UDP-N-acetylglucosamine (UDP-GlcNAc). The C-terminal domain catalyzes the transfer of acetyl group from acetyl coenzyme A to glucosamine-1-phosphate (GlcN-1-P) to produce N-acetylglucosamine-1-phosphate (GlcNAc-1-P), which is converted into UDP-GlcNAc by the transfer of uridine 5-monophosphate (from uridine 5-triphosphate), a reaction catalyzed by the N-terminal domain. This chain is Bifunctional protein GlmU, found in Azoarcus sp. (strain BH72).